The primary structure comprises 375 residues: Chaperone protein DnaJ (375 aa).

Positions 6-71 (DYYEVLGVPK…EKRRQYDQFG (66 aa)) constitute a J domain. Residues 138–220 (GTTKKIDVTL…CYGTGYISSK (83 aa)) form a CR-type zinc finger. Residues C151, C154, C168, C171, C194, C197, C208, and C211 each contribute to the Zn(2+) site. CXXCXGXG motif repeat units follow at residues 151-158 (CSSCHGTG), 168-175 (CSKCGGRG), 194-201 (CPDCHGTG), and 208-215 (CPDCYGTG).

The protein belongs to the DnaJ family. Homodimer. The cofactor is Zn(2+).

Its subcellular location is the cytoplasm. In terms of biological role, participates actively in the response to hyperosmotic and heat shock by preventing the aggregation of stress-denatured proteins and by disaggregating proteins, also in an autonomous, DnaK-independent fashion. Unfolded proteins bind initially to DnaJ; upon interaction with the DnaJ-bound protein, DnaK hydrolyzes its bound ATP, resulting in the formation of a stable complex. GrpE releases ADP from DnaK; ATP binding to DnaK triggers the release of the substrate protein, thus completing the reaction cycle. Several rounds of ATP-dependent interactions between DnaJ, DnaK and GrpE are required for fully efficient folding. Also involved, together with DnaK and GrpE, in the DNA replication of plasmids through activation of initiation proteins. This chain is Chaperone protein DnaJ, found in Lachnospira eligens (strain ATCC 27750 / DSM 3376 / VPI C15-48 / C15-B4) (Eubacterium eligens).